A 471-amino-acid polypeptide reads, in one-letter code: Probable ribonuclease FAU-1 (471 aa).

The protein belongs to the FAU-1 family.

Its function is as follows. Probable RNase involved in rRNA stability through maturation and/or degradation of precursor rRNAs. Binds to RNA in loop regions with AU-rich sequences. In Caldivirga maquilingensis (strain ATCC 700844 / DSM 13496 / JCM 10307 / IC-167), this protein is Probable ribonuclease FAU-1.